Reading from the N-terminus, the 295-residue chain is N-acetylmuramic acid 6-phosphate etherase (295 aa).

Residues 53-216 enclose the SIS domain; that stretch reads AIQRFNNGGR…STMTMIGVGK (164 aa). The Proton donor role is filled by Glu-81. The active site involves Glu-112.

The protein belongs to the GCKR-like family. MurNAc-6-P etherase subfamily. Homodimer.

It carries out the reaction N-acetyl-D-muramate 6-phosphate + H2O = N-acetyl-D-glucosamine 6-phosphate + (R)-lactate. Its pathway is amino-sugar metabolism; N-acetylmuramate degradation. In terms of biological role, specifically catalyzes the cleavage of the D-lactyl ether substituent of MurNAc 6-phosphate, producing GlcNAc 6-phosphate and D-lactate. The protein is N-acetylmuramic acid 6-phosphate etherase of Staphylococcus epidermidis (strain ATCC 35984 / DSM 28319 / BCRC 17069 / CCUG 31568 / BM 3577 / RP62A).